The primary structure comprises 209 residues: Ribosomal RNA large subunit methyltransferase E (209 aa).

Positions 60, 62, 80, 96, and 121 each coordinate S-adenosyl-L-methionine. K161 acts as the Proton acceptor in catalysis.

It belongs to the class I-like SAM-binding methyltransferase superfamily. RNA methyltransferase RlmE family.

It localises to the cytoplasm. It carries out the reaction uridine(2552) in 23S rRNA + S-adenosyl-L-methionine = 2'-O-methyluridine(2552) in 23S rRNA + S-adenosyl-L-homocysteine + H(+). Specifically methylates the uridine in position 2552 of 23S rRNA at the 2'-O position of the ribose in the fully assembled 50S ribosomal subunit. The sequence is that of Ribosomal RNA large subunit methyltransferase E from Pseudomonas fluorescens (strain Pf0-1).